The sequence spans 481 residues: uncharacterized protein (481 aa).

13 helical membrane passes run 3 to 23 (YLPM…LLHG), 33 to 53 (FITA…YYYF), 75 to 95 (QAII…GMGE), 99 to 119 (NNMF…IVLA), 122 to 142 (IFNL…LVFL), 155 to 175 (YMIM…FLLA), 196 to 216 (IYGG…LPPF), 241 to 261 (FVLV…DYFA), 264 to 284 (HAVL…MALL), 303 to 323 (VATG…FHAI), 351 to 371 (GGLL…KLAI), 400 to 420 (IIMI…FYLI), and 443 to 463 (VFSL…PDIV).

The protein localises to the cell membrane. This is an uncharacterized protein from Methanocaldococcus jannaschii (strain ATCC 43067 / DSM 2661 / JAL-1 / JCM 10045 / NBRC 100440) (Methanococcus jannaschii).